The sequence spans 114 residues: Photosystem II reaction center Psb28 protein (114 aa).

Belongs to the Psb28 family. In terms of assembly, part of the photosystem II complex.

It is found in the plastid. Its subcellular location is the chloroplast thylakoid membrane. The protein is Photosystem II reaction center Psb28 protein of Gracilaria tenuistipitata var. liui (Red alga).